An 881-amino-acid chain; its full sequence is DNA mismatch repair protein MutS (881 aa).

Position 605-612 (glycine 605–serine 612) interacts with ATP.

This sequence belongs to the DNA mismatch repair MutS family.

In terms of biological role, this protein is involved in the repair of mismatches in DNA. It is possible that it carries out the mismatch recognition step. This protein has a weak ATPase activity. The sequence is that of DNA mismatch repair protein MutS from Limosilactobacillus reuteri subsp. reuteri (strain JCM 1112) (Lactobacillus reuteri).